A 484-amino-acid polypeptide reads, in one-letter code: Glutamate--tRNA ligase (484 aa).

The 'HIGH' region signature appears at 11-21 (PSPTGYLHIGN). Residues 252–256 (KLSKR) carry the 'KMSKS' region motif. Lysine 255 provides a ligand contact to ATP.

The protein belongs to the class-I aminoacyl-tRNA synthetase family. Glutamate--tRNA ligase type 1 subfamily. Monomer.

Its subcellular location is the cytoplasm. The catalysed reaction is tRNA(Glu) + L-glutamate + ATP = L-glutamyl-tRNA(Glu) + AMP + diphosphate. In terms of biological role, catalyzes the attachment of glutamate to tRNA(Glu) in a two-step reaction: glutamate is first activated by ATP to form Glu-AMP and then transferred to the acceptor end of tRNA(Glu). The protein is Glutamate--tRNA ligase of Staphylococcus aureus (strain Newman).